The chain runs to 515 residues: RNA-splicing ligase RtcB homolog (515 aa).

Mn(2+)-binding residues include Asp129, Cys132, His237, His269, and His363. GMP is bound at residue 236–240 (NHYAE). Residues 363–364 (HN), 412–415 (GGTM), Ser419, 438–441 (HGAG), and Lys514 each bind GMP. The active-site GMP-histidine intermediate is the His438.

The protein belongs to the RtcB family. As to quaternary structure, catalytic component of the tRNA-splicing ligase complex. Mn(2+) is required as a cofactor.

It carries out the reaction a 3'-end 3'-phospho-ribonucleotide-RNA + a 5'-end dephospho-ribonucleoside-RNA + GTP = a ribonucleotidyl-ribonucleotide-RNA + GMP + diphosphate. It catalyses the reaction a 3'-end 2',3'-cyclophospho-ribonucleotide-RNA + a 5'-end dephospho-ribonucleoside-RNA + GTP + H2O = a ribonucleotidyl-ribonucleotide-RNA + GMP + diphosphate + H(+). Functionally, catalytic subunit of the tRNA-splicing ligase complex that acts by directly joining spliced tRNA halves to mature-sized tRNAs by incorporating the precursor-derived splice junction phosphate into the mature tRNA as a canonical 3',5'-phosphodiester. May act as an RNA ligase with broad substrate specificity, and may function toward other RNAs. This is RNA-splicing ligase RtcB homolog from Ostreococcus tauri.